The primary structure comprises 142 residues: Putative pre-16S rRNA nuclease (142 aa).

This sequence belongs to the YqgF nuclease family.

The protein localises to the cytoplasm. Its function is as follows. Could be a nuclease involved in processing of the 5'-end of pre-16S rRNA. This chain is Putative pre-16S rRNA nuclease, found in Mycoplasmoides gallisepticum (strain R(low / passage 15 / clone 2)) (Mycoplasma gallisepticum).